The sequence spans 542 residues: uncharacterized protein (542 aa).

5 helical membrane-spanning segments follow: residues 4 to 23 (FVENQLLALVAIMGIGLLLG), 28 to 47 (FGFRLGVAAVLFVGLAFSTI), 51 to 70 (ITVPPLIYVVGLALFVYTIG), 91 to 113 (LALGAIIATTAIAWVVIKALGLA), and 160 to 182 (YSLTYPLGVLVVILTIAVCGGLF). RCK C-terminal domains lie at 190–272 (AKNA…LLGE) and 274–355 (VDGH…IFGD). 5 helical membrane-spanning segments follow: residues 363-385 (FNLVPLVVGLSLGVLVGMMEFPL), 390-412 (ALSLGNAGGPLLIALLLGAMGRT), 425-447 (LALRQLGITMFLAAIGTTAGAGF), 457-479 (LLIIGVGALLTLVISVLVLVIGH), and 519-541 (YTSVYPLAMVAKIIAAQVLLFLL).

It belongs to the AAE transporter (TC 2.A.81) family.

It is found in the cell membrane. This is an uncharacterized protein from Corynebacterium efficiens (strain DSM 44549 / YS-314 / AJ 12310 / JCM 11189 / NBRC 100395).